The primary structure comprises 66 residues: Large ribosomal subunit protein bL35 (66 aa).

Belongs to the bacterial ribosomal protein bL35 family.

The polypeptide is Large ribosomal subunit protein bL35 (Treponema denticola (strain ATCC 35405 / DSM 14222 / CIP 103919 / JCM 8153 / KCTC 15104)).